A 374-amino-acid chain; its full sequence is tRNA-specific 2-thiouridylase MnmA (374 aa).

Residues 13–20 (GMSGGVDS) and Met39 each bind ATP. The segment at 99 to 101 (NPD) is interaction with target base in tRNA. The active-site Nucleophile is the Cys104. A disulfide bond links Cys104 and Cys201. An ATP-binding site is contributed by Gly128. Residues 151–153 (KDQ) form an interaction with tRNA region. Cys201 acts as the Cysteine persulfide intermediate in catalysis. The interval 313–314 (RY) is interaction with tRNA.

This sequence belongs to the MnmA/TRMU family.

The protein localises to the cytoplasm. The catalysed reaction is S-sulfanyl-L-cysteinyl-[protein] + uridine(34) in tRNA + AH2 + ATP = 2-thiouridine(34) in tRNA + L-cysteinyl-[protein] + A + AMP + diphosphate + H(+). Functionally, catalyzes the 2-thiolation of uridine at the wobble position (U34) of tRNA, leading to the formation of s(2)U34. The sequence is that of tRNA-specific 2-thiouridylase MnmA from Streptococcus suis (strain 98HAH33).